Reading from the N-terminus, the 464-residue chain is Argininosuccinate lyase 2 (464 aa).

Belongs to the lyase 1 family. Argininosuccinate lyase subfamily.

It localises to the cytoplasm. The enzyme catalyses 2-(N(omega)-L-arginino)succinate = fumarate + L-arginine. Its pathway is amino-acid biosynthesis; L-arginine biosynthesis; L-arginine from L-ornithine and carbamoyl phosphate: step 3/3. In Pseudomonas fluorescens (strain Pf0-1), this protein is Argininosuccinate lyase 2.